The sequence spans 440 residues: Glycerophosphocholine cholinephosphodiesterase ENPP6 (440 aa).

An N-terminal signal peptide occupies residues 1–22; sequence MAVKLGTLLLALALGLAQPASA. Substrate contacts are provided by aspartate 32, serine 71, and asparagine 92. Zn(2+) is bound by residues aspartate 32 and serine 71. The active-site Nucleophile is serine 71. Position 71 is a phosphoserine (serine 71). N-linked (GlcNAc...) asparagine glycosylation is found at asparagine 100 and asparagine 118. A disulfide bond links cysteine 142 and cysteine 154. A substrate-binding site is contributed by aspartate 193. Residues aspartate 193, histidine 197, aspartate 240, and histidine 241 each coordinate Zn(2+). Residue histidine 241 participates in substrate binding. Asparagine 341 carries an N-linked (GlcNAc...) asparagine glycan. Residue histidine 354 participates in substrate binding. Zn(2+) is bound at residue histidine 354. N-linked (GlcNAc...) asparagine glycosylation occurs at asparagine 404. A lipid anchor (GPI-anchor amidated serine) is attached at serine 419. The propeptide at 420–440 is removed in mature form; that stretch reads TAPPVWPSHCALALILLFLLA.

It belongs to the nucleotide pyrophosphatase/phosphodiesterase family. In terms of assembly, homodimer; disulfide-linked. Homotetramer. Zn(2+) serves as cofactor. As to expression, predominantly expressed in kidney and brain. In the kidney, expressed specifically in the proximal tubules and thin descending limbs of Henle (at protein level).

The protein localises to the cell membrane. It carries out the reaction sn-glycerol 3-phosphocholine + H2O = phosphocholine + glycerol + H(+). It catalyses the reaction a 1-acyl-sn-glycero-3-phosphocholine + H2O = a 1-acyl-sn-glycerol + phosphocholine + H(+). The catalysed reaction is a 1-O-alkyl-sn-glycero-3-phosphocholine + H2O = a 1-O-alkyl-sn-glycerol + phosphocholine + H(+). The enzyme catalyses 1-dodecanoyl-sn-glycero-3-phosphocholine + H2O = 1-dodecanoyl-sn-glycerol + phosphocholine + H(+). It carries out the reaction 1-hexadecanoyl-sn-glycero-3-phosphocholine + H2O = 1-hexadecanoyl-sn-glycerol + phosphocholine + H(+). It catalyses the reaction 1-(5Z,8Z,11Z,14Z-eicosatetraenoyl)-sn-glycero-3-phosphocholine + H2O = 1-(5Z,8Z,11Z,14Z-eicosatetraenoyl)-sn-glycerol + phosphocholine + H(+). The catalysed reaction is 1-tetradecanoyl-sn-glycero-3-phosphocholine + H2O = 1-tetradecanoyl-sn-glycerol + phosphocholine + H(+). The enzyme catalyses sphing-4-enine-phosphocholine + H2O = sphing-4-enine + phosphocholine + H(+). It carries out the reaction 1-(9Z-octadecenoyl)-sn-glycero-3-phosphocholine + H2O = 1-(9Z-octadecenoyl)-sn-glycerol + phosphocholine + H(+). It catalyses the reaction 1-(9Z,12Z)-octadecadienoyl-sn-glycero-3-phosphocholine + H2O = 1-(9Z,12Z-octadecadienoyl)-sn-glycerol + phosphocholine + H(+). The catalysed reaction is glycero-2-phosphocholine + H2O = phosphocholine + glycerol + H(+). Inhibited by EDTA and EGTA in vitro. Choline-specific glycerophosphodiesterase that hydrolyzes glycerophosphocholine (GPC) and lysophosphatidylcholine (LPC) and contributes to supplying choline to the cells. Has a preference for LPC with short (12:0 and 14:0) or polyunsaturated (18:2 and 20:4) fatty acids. In vitro, hydrolyzes only choline-containing lysophospholipids, such as sphingosylphosphorylcholine (SPC), platelet-activating factor (PAF) and lysoPAF, but not other lysophospholipids. This Homo sapiens (Human) protein is Glycerophosphocholine cholinephosphodiesterase ENPP6.